The sequence spans 316 residues: Glycine--tRNA ligase alpha subunit (316 aa).

It belongs to the class-II aminoacyl-tRNA synthetase family. As to quaternary structure, tetramer of two alpha and two beta subunits.

The protein localises to the cytoplasm. It catalyses the reaction tRNA(Gly) + glycine + ATP = glycyl-tRNA(Gly) + AMP + diphosphate. The sequence is that of Glycine--tRNA ligase alpha subunit from Paracoccus denitrificans (strain Pd 1222).